The primary structure comprises 322 residues: HPr kinase/phosphorylase (322 aa).

Residues His143 and Lys164 contribute to the active site. Residue 158–165 (GRSGVGKS) participates in ATP binding. Ser165 provides a ligand contact to Mg(2+). The active-site Proton acceptor; for phosphorylation activity. Proton donor; for dephosphorylation activity is the Asp182. The segment at 206 to 215 (MEIRGLGILN) is important for the catalytic mechanism of both phosphorylation and dephosphorylation. Glu207 provides a ligand contact to Mg(2+). The active site involves Arg250. The important for the catalytic mechanism of dephosphorylation stretch occupies residues 271–276 (PVKPGR).

Belongs to the HPrK/P family. In terms of assembly, homohexamer. It depends on Mg(2+) as a cofactor.

It carries out the reaction [HPr protein]-L-serine + ATP = [HPr protein]-O-phospho-L-serine + ADP + H(+). It catalyses the reaction [HPr protein]-O-phospho-L-serine + phosphate + H(+) = [HPr protein]-L-serine + diphosphate. Catalyzes the ATP- as well as the pyrophosphate-dependent phosphorylation of a specific serine residue in HPr, a phosphocarrier protein of the phosphoenolpyruvate-dependent sugar phosphotransferase system (PTS). HprK/P also catalyzes the pyrophosphate-producing, inorganic phosphate-dependent dephosphorylation (phosphorolysis) of seryl-phosphorylated HPr (P-Ser-HPr). This is HPr kinase/phosphorylase from Leptospira biflexa serovar Patoc (strain Patoc 1 / Ames).